Reading from the N-terminus, the 285-residue chain is RNA polymerase sigma factor RpoH (285 aa).

The segment at leucine 53–arginine 122 is sigma-70 factor domain-2. The Interaction with polymerase core subunit RpoC motif lies at aspartate 77–glutamine 80. A sigma-70 factor domain-4 region spans residues alanine 229–methionine 280. Positions leucine 253–lysine 272 form a DNA-binding region, H-T-H motif.

The protein belongs to the sigma-70 factor family. RpoH subfamily. As to quaternary structure, interacts with the RNA polymerase core enzyme.

It localises to the cytoplasm. Sigma factors are initiation factors that promote the attachment of RNA polymerase to specific initiation sites and are then released. This sigma factor is involved in regulation of expression of heat shock genes. This chain is RNA polymerase sigma factor RpoH, found in Vibrio vulnificus (strain CMCP6).